The sequence spans 153 residues: Type II secretion system core protein G (153 aa).

Positions 1–7 (MERRQRG) are cleaved as a propeptide — leader sequence. Phe-8 bears the N-methylphenylalanine mark. A helical transmembrane segment spans residues 8–28 (FTLLEIMVVIVILGVLASLVV). Disordered regions lie at residues 68–91 (EQGLGALVKKPTTPPEPRNYPQDG) and 126–153 (MPDTDDDIGNWNVGNGAHNNGGNGNGNP). A compositionally biased stretch (low complexity) spans 134–143 (GNWNVGNGAH). The span at 144–153 (NNGGNGNGNP) shows a compositional bias: gly residues.

It belongs to the GSP G family. In terms of assembly, type II secretion system is composed of four main components: the outer membrane complex, the inner membrane complex, the cytoplasmic secretion ATPase and the periplasm-spanning pseudopilus. Forms homomultimers. Cleaved by the prepilin peptidase. Post-translationally, methylated by prepilin peptidase at the amino group of the N-terminal phenylalanine once the leader sequence is cleaved.

The protein resides in the cell inner membrane. In terms of biological role, core component of the type II secretion system required for the energy-dependent secretion of extracellular factors such as proteases and toxins from the periplasm. Pseudopilin (pilin-like) protein that polymerizes to form the pseudopilus. Further polymerization triggers pseudopilus growth. This Dickeya chrysanthemi (Pectobacterium chrysanthemi) protein is Type II secretion system core protein G (outG).